A 323-amino-acid polypeptide reads, in one-letter code: MIDFGNFYSLIAKNHLSHWLETLPAQIANWQREQQHGLFKQWSNTVEFLPEIKPYRLDLLHSVTAESEEPLSTGQIKRIETLMRNLMPWRKGPFSLYGVNIDTEWCSDWKWDRVLPHLSDLTGRTILDVGCGSGYHMWRMIGAGAHLAVGIDPTQLFLCQFEAVRKLLGNDQRAHLLPLGIEQLPALKAFDTVFSMGVLYHRRSPLEHLWQLKDQLVNEGELVLETLVIDGDENTVLVPGDRYAQMRNVYFIPSALALKNWLKKCGFVDIRIVDVCVTTTEEQRRTEWMVTESLSDFLDPHDPSKTVEGYPAPKRAVLIARKP.

Residues K91, W105, K110, G130, 152–154 (DPT), 181–182 (IE), M196, Y200, and R315 each bind carboxy-S-adenosyl-L-methionine.

This sequence belongs to the class I-like SAM-binding methyltransferase superfamily. CmoB family. Homotetramer.

It carries out the reaction carboxy-S-adenosyl-L-methionine + 5-hydroxyuridine(34) in tRNA = 5-carboxymethoxyuridine(34) in tRNA + S-adenosyl-L-homocysteine + H(+). Catalyzes carboxymethyl transfer from carboxy-S-adenosyl-L-methionine (Cx-SAM) to 5-hydroxyuridine (ho5U) to form 5-carboxymethoxyuridine (cmo5U) at position 34 in tRNAs. The chain is tRNA U34 carboxymethyltransferase from Shigella flexneri.